The chain runs to 147 residues: Prefoldin subunit alpha (147 aa).

Belongs to the prefoldin alpha subunit family. In terms of assembly, heterohexamer of two alpha and four beta subunits.

It is found in the cytoplasm. Molecular chaperone capable of stabilizing a range of proteins. Seems to fulfill an ATP-independent, HSP70-like function in archaeal de novo protein folding. The chain is Prefoldin subunit alpha from Saccharolobus islandicus (strain M.16.27) (Sulfolobus islandicus).